The following is a 591-amino-acid chain: Aspartate--tRNA ligase (591 aa).

Glu176 is an L-aspartate binding site. Residues 200–203 (QILK) are aspartate. Arg222 lines the L-aspartate pocket. ATP-binding positions include 222-224 (RDE) and Gln231. His450 is an L-aspartate binding site. Glu484 lines the ATP pocket. L-aspartate is bound at residue Arg491. 536–539 (GLDR) is an ATP binding site.

The protein belongs to the class-II aminoacyl-tRNA synthetase family. Type 1 subfamily. As to quaternary structure, homodimer.

Its subcellular location is the cytoplasm. It catalyses the reaction tRNA(Asp) + L-aspartate + ATP = L-aspartyl-tRNA(Asp) + AMP + diphosphate. Functionally, catalyzes the attachment of L-aspartate to tRNA(Asp) in a two-step reaction: L-aspartate is first activated by ATP to form Asp-AMP and then transferred to the acceptor end of tRNA(Asp). This chain is Aspartate--tRNA ligase, found in Listeria monocytogenes serotype 4a (strain HCC23).